Reading from the N-terminus, the 114-residue chain is Large ribosomal subunit protein bL19 (114 aa).

This sequence belongs to the bacterial ribosomal protein bL19 family.

This protein is located at the 30S-50S ribosomal subunit interface and may play a role in the structure and function of the aminoacyl-tRNA binding site. This is Large ribosomal subunit protein bL19 from Thermoanaerobacter sp. (strain X514).